Consider the following 822-residue polypeptide: LPS-assembly protein LptD (822 aa).

The N-terminal stretch at 1–37 is a signal peptide; that stretch reads MRRASRSPFILSPVAHAVSRLVLCATLGWTYAGSGHA. The disordered stretch occupies residues 38–97; sequence QVPAPAGGSEVPLGARPPASAPVAAQQETPLKLKSSPALAEEVPNGPGDEGPTFVFGDSV.

Belongs to the LptD family. As to quaternary structure, component of the lipopolysaccharide transport and assembly complex. Interacts with LptE and LptA.

The protein resides in the cell outer membrane. In terms of biological role, together with LptE, is involved in the assembly of lipopolysaccharide (LPS) at the surface of the outer membrane. The protein is LPS-assembly protein LptD of Polaromonas sp. (strain JS666 / ATCC BAA-500).